Here is a 722-residue protein sequence, read N- to C-terminus: Phenylalanine ammonia-lyase lenB (722 aa).

Y83 acts as the Proton donor/acceptor in catalysis. Residues 117–136 are disordered; the sequence is LPTDRSSSRPSSRYPHGLRS. Positions 190-192 form a cross-link, 5-imidazolinone (Ala-Gly); that stretch reads ASG. Residue S191 is modified to 2,3-didehydroalanine (Ser). Positions 247, 334, 340, 370, 441, 469, and 472 each coordinate (E)-cinnamate.

It belongs to the PAL/histidase family. Contains an active site 4-methylidene-imidazol-5-one (MIO), which is formed autocatalytically by cyclization and dehydration of residues Ala-Ser-Gly.

It catalyses the reaction L-phenylalanine = (E)-cinnamate + NH4(+). The protein operates within alkaloid biosynthesis. Phenylalanine ammonia-lyase; part of the gene cluster that mediates the biosynthesis of the ergot alkaloids lentopeptins A and B. Within the pathway, lenB provides the cinnamic acid starter unit for the synthesis of the N-acyldiketopiperazine intermediate by the NRPS lenA. Cinnamic acid is condensed with the Ala-Val-Ala peptide chain by lenA which leads to the N-acyldiketopiperazine intermediate which in turn is converted into lentopeptins A and B by the cytochrome P450 monooxygenase lenC. The protein is Phenylalanine ammonia-lyase lenB of Aspergillus lentulus.